The chain runs to 870 residues: Suppressor of yeast profilin deletion (870 aa).

Positions 252-267 are enriched in polar residues; it reads SSSSKEVVPNNASPAS. 2 disordered regions span residues 252–298 and 310–574; these read SSSS…RKSA and SSSL…TLSS. Lys256 is covalently cross-linked (Glycyl lysine isopeptide (Lys-Gly) (interchain with G-Cter in ubiquitin)). At Ser264 the chain carries Phosphoserine. Residues 283 to 292 are compositionally biased toward basic and acidic residues; that stretch reads TEREKKSPQK. Residues 310–323 show a composition bias toward polar residues; it reads SSSLTHNDLMNNEF. Position 331 is a phosphoserine (Ser331). Over residues 333–342 the composition is skewed to basic residues; sequence KSKKSSHTLR. Residues 367–378 are compositionally biased toward polar residues; it reads HIQASITETPNN. Positions 379–390 are enriched in low complexity; the sequence is SSTRVSSTATSS. The segment covering 398-409 has biased composition (polar residues); sequence PTYSSSKSNNWT. Thr416 carries the phosphothreonine modification. Over residues 473 to 485 the composition is skewed to low complexity; that stretch reads PISISQPPLQPQS. Phosphoserine occurs at positions 496 and 500. Residues 497 to 514 are compositionally biased toward polar residues; the sequence is PSISLPTATVDNQPSGQV. Thr577 bears the Phosphothreonine mark. The region spanning 609 to 869 is the MHD domain; it reads QFGLNASIAE…TLTTGNYHGL (261 aa).

It belongs to the SYP1 family. In terms of assembly, interacts with CDC3, CDC10, CDC11, CDC12, EDE1 and EPS15.

The protein resides in the bud neck. Functionally, multi-functional protein that contributes to the endocytic process, but also to events that occur at the neck during budding and/or cytokinesis. Plays a role as an endocytic adapters with membrane-tubulation activity that associates with transmembrane cargo proteins and initiates the formation of endocytic sites. Contributes to the stabilization of the nascent clathrin-coated pit. Also plays a role in late endocytosis by mediating vesiculation. Involved in the regulation of cell cycle-dependent dynamics of the septin cytoskeleton by promoting septin turnover in different cell cycle stages. May act through the RHO2 signaling pathway to repolarize cortical actin patches in profilin-deficient cells. The polypeptide is Suppressor of yeast profilin deletion (SYP1) (Saccharomyces cerevisiae (strain ATCC 204508 / S288c) (Baker's yeast)).